Consider the following 103-residue polypeptide: Large ribosomal subunit protein bL21 (103 aa).

The protein belongs to the bacterial ribosomal protein bL21 family. Part of the 50S ribosomal subunit. Contacts protein L20.

Its function is as follows. This protein binds to 23S rRNA in the presence of protein L20. This Thermobifida fusca (strain YX) protein is Large ribosomal subunit protein bL21.